Here is a 1383-residue protein sequence, read N- to C-terminus: DNA-directed RNA polymerase subunit beta (1383 aa).

It belongs to the RNA polymerase beta chain family. The RNAP catalytic core consists of 2 alpha, 1 beta, 1 beta' and 1 omega subunit. When a sigma factor is associated with the core the holoenzyme is formed, which can initiate transcription.

The enzyme catalyses RNA(n) + a ribonucleoside 5'-triphosphate = RNA(n+1) + diphosphate. DNA-dependent RNA polymerase catalyzes the transcription of DNA into RNA using the four ribonucleoside triphosphates as substrates. The chain is DNA-directed RNA polymerase subunit beta from Xanthomonas euvesicatoria pv. vesicatoria (strain 85-10) (Xanthomonas campestris pv. vesicatoria).